Reading from the N-terminus, the 290-residue chain is Secreted chorismate mutase (290 aa).

The signal sequence occupies residues 1-21 (MKLSVSIFVLLAVSAFGGGSA). A KWL1-binding extensive loop region (ELR) region spans residues 117 to 140 (VVLSRDTVLDKPVVGKGIFPIGRR). 2 N-linked (GlcNAc...) asparagine glycosylation sites follow: asparagine 159 and asparagine 208.

Homodimer. Forms a heterodimer with the host cytosolic chorismate mutase CM2. Interacts with the host kiwellin KWL1 which acts as a defense protein that protects maize from infection.

It localises to the secreted. The protein resides in the host cytoplasm. Its subcellular location is the host cytosol. It carries out the reaction chorismate = prephenate. Contrary to classical chorismate mutases, CMU1 is not subject to allosteric regulation by tryptophan and tyrosine. Activity is decreased in a non-competitive and allosteric manner by the binding of the host defense kiwellin KWL1 which probably blocks substrate access to the active site of CMU1. Functionally, secreted chorismate mutase that is one component of a cocktail of effectors shaping the host metabolome and acting as virulence factors. The enzyme is taken up by plant cells, can spread to neighboring cells where it affects the biosynthesis of the plant immune signal salicylic acid by channelling chorismate into the phenylpropanoid pathway. Interferes with the activity of host cytosolic chorismate mutase CM2 through heterodimerization. In Mycosarcoma maydis (Corn smut fungus), this protein is Secreted chorismate mutase (CMU1).